Here is a 241-residue protein sequence, read N- to C-terminus: ATP synthase subunit a (241 aa).

A run of 5 helical transmembrane segments spans residues 30–50 (GQVFMTSWLLIGALLALVVIG), 91–111 (FIGTLFLFIFVSNWGGALVPW), 128–148 (INTTVALALLVSLSYFYAGLS), 193–213 (LVVAVLVFLVPLVLPVPVMFL), and 214–234 (GLFTSAIQALIFATLAAYYIG).

This sequence belongs to the ATPase A chain family. In terms of assembly, F-type ATPases have 2 components, CF(1) - the catalytic core - and CF(0) - the membrane proton channel. CF(1) has five subunits: alpha(3), beta(3), gamma(1), delta(1), epsilon(1). CF(0) has four main subunits: a, b, b' and c.

It localises to the cellular thylakoid membrane. Its function is as follows. Key component of the proton channel; it plays a direct role in the translocation of protons across the membrane. The chain is ATP synthase subunit a from Prochlorococcus marinus (strain NATL1A).